The sequence spans 602 residues: NAD-reducing hydrogenase HoxS subunit alpha (602 aa).

219–228 (GRGGAGFSTG) contacts NAD(+). Residue 332–379 (GAGAYICGDESALIESCEGKRGTPRVKPPFPVQQGYLGKPTSVNNVET) participates in FMN binding. Residues Cys499, Cys502, Cys505, and Cys545 each coordinate [4Fe-4S] cluster.

It belongs to the complex I 51 kDa subunit family. Tetramer of an alpha and a gamma subunits (flavin-containing dimer), and a delta and a nickel-containing beta subunit (hydrogenase dimer). The cofactor is FMN. It depends on [4Fe-4S] cluster as a cofactor.

The protein resides in the cytoplasm. It carries out the reaction H2 + NAD(+) = NADH + H(+). Subunits alpha and gamma of HoxS constitute an NADH--oxidoreductase. The polypeptide is NAD-reducing hydrogenase HoxS subunit alpha (hoxF) (Cupriavidus necator (strain ATCC 17699 / DSM 428 / KCTC 22496 / NCIMB 10442 / H16 / Stanier 337) (Ralstonia eutropha)).